The following is a 231-amino-acid chain: SrfA-induced gene F protein (231 aa).

The protein is SrfA-induced gene F protein (sigF) of Dictyostelium discoideum (Social amoeba).